We begin with the raw amino-acid sequence, 57 residues long: Large ribosomal subunit protein uL30 (57 aa).

This sequence belongs to the universal ribosomal protein uL30 family. Part of the 50S ribosomal subunit.

This Maridesulfovibrio salexigens (strain ATCC 14822 / DSM 2638 / NCIMB 8403 / VKM B-1763) (Desulfovibrio salexigens) protein is Large ribosomal subunit protein uL30.